We begin with the raw amino-acid sequence, 376 residues long: Zinc finger CCCH domain-containing protein C337.12 (376 aa).

The stretch at 2–25 forms a coiled coil; it reads NEQQLLENIASLAGAINQYKNEKE. The disordered stretch occupies residues 60–95; that stretch reads SKSTAASPPYVIPSTSSNADDANKEPEKQSTSDYVS. The segment covering 80–89 has biased composition (basic and acidic residues); that stretch reads DANKEPEKQS. Residues 105–140 are a coiled coil; sequence KKNILEHDLQARKANLESYRAKLEKEYKTLAENKIQ. 4 C3H1-type zinc fingers span residues 202-228, 229-256, 257-283, and 284-312; these read SPSA…FVHE, PTRK…HELD, PRRI…HIHY, and SENA…HILQ. A disordered region spans residues 347-376; it reads SKTAGSINPEDSGSEIGSNSLESNLDFISV. Polar residues predominate over residues 349–369; the sequence is TAGSINPEDSGSEIGSNSLES.

The protein localises to the nucleus. The polypeptide is Zinc finger CCCH domain-containing protein C337.12 (Schizosaccharomyces pombe (strain 972 / ATCC 24843) (Fission yeast)).